The sequence spans 144 residues: Large ribosomal subunit protein uL16 (144 aa).

Residues Met1–Gly19 are compositionally biased toward basic residues. A disordered region spans residues Met1–Gly23.

The protein belongs to the universal ribosomal protein uL16 family. As to quaternary structure, part of the 50S ribosomal subunit.

Functionally, binds 23S rRNA and is also seen to make contacts with the A and possibly P site tRNAs. The protein is Large ribosomal subunit protein uL16 of Staphylococcus saprophyticus subsp. saprophyticus (strain ATCC 15305 / DSM 20229 / NCIMB 8711 / NCTC 7292 / S-41).